The following is a 270-amino-acid chain: Putative pyruvate, phosphate dikinase regulatory protein (270 aa).

151–158 contacts ADP; sequence GVSRTSKT.

This sequence belongs to the pyruvate, phosphate/water dikinase regulatory protein family. PDRP subfamily.

The catalysed reaction is N(tele)-phospho-L-histidyl/L-threonyl-[pyruvate, phosphate dikinase] + ADP = N(tele)-phospho-L-histidyl/O-phospho-L-threonyl-[pyruvate, phosphate dikinase] + AMP + H(+). The enzyme catalyses N(tele)-phospho-L-histidyl/O-phospho-L-threonyl-[pyruvate, phosphate dikinase] + phosphate + H(+) = N(tele)-phospho-L-histidyl/L-threonyl-[pyruvate, phosphate dikinase] + diphosphate. Its function is as follows. Bifunctional serine/threonine kinase and phosphorylase involved in the regulation of the pyruvate, phosphate dikinase (PPDK) by catalyzing its phosphorylation/dephosphorylation. The chain is Putative pyruvate, phosphate dikinase regulatory protein from Ligilactobacillus salivarius (strain UCC118) (Lactobacillus salivarius).